A 464-amino-acid polypeptide reads, in one-letter code: Argininosuccinate lyase (464 aa).

The protein belongs to the lyase 1 family. Argininosuccinate lyase subfamily.

The protein localises to the cytoplasm. The enzyme catalyses 2-(N(omega)-L-arginino)succinate = fumarate + L-arginine. Its pathway is amino-acid biosynthesis; L-arginine biosynthesis; L-arginine from L-ornithine and carbamoyl phosphate: step 3/3. This Azotobacter vinelandii (strain DJ / ATCC BAA-1303) protein is Argininosuccinate lyase.